Reading from the N-terminus, the 26-residue chain is Omega-conotoxin TVIA (26 aa).

3 disulfide bridges follow: cysteine 1/cysteine 16, cysteine 8/cysteine 19, and cysteine 15/cysteine 26. A 4-hydroxyproline mark is found at proline 4, proline 10, and proline 21.

It belongs to the conotoxin O1 superfamily. Expressed by the venom duct.

It localises to the secreted. In terms of biological role, omega-conotoxins act at presynaptic membranes, they bind and block voltage-gated calcium channels (Cav). This is Omega-conotoxin TVIA from Conus tulipa (Fish-hunting cone snail).